The sequence spans 293 residues: MDQQALDKAAVLAEALPYIREFSGKTVVIKYGGAAMAAADLKAAVMQDIALMKYVGMHPIVVHGGGPEVSELARRMGIEPQFVDGLRVTDAATMEIAQMVLVGKTNREIVTHLCAQGVKAVGLSGQDAGLIRAARHLHRSRETGEMVDLGFVGDVAAVDTEVLTTLTTAGYVPVIAPIGVGPGGQPYNINADTVAGAIAAAMKAEKLVLLTDVEGVRADKDDPSSLLSRVTAQEVKSWIARGRLQGGMIPKLQCCLTALEGGVNRVHIIDGRVPHSLLLEIFTDEGVGTMVVK.

Substrate-binding positions include Gly65 to Gly66, Arg87, and Asn188.

Belongs to the acetylglutamate kinase family. ArgB subfamily.

It is found in the cytoplasm. The catalysed reaction is N-acetyl-L-glutamate + ATP = N-acetyl-L-glutamyl 5-phosphate + ADP. It functions in the pathway amino-acid biosynthesis; L-arginine biosynthesis; N(2)-acetyl-L-ornithine from L-glutamate: step 2/4. In terms of biological role, catalyzes the ATP-dependent phosphorylation of N-acetyl-L-glutamate. The polypeptide is Acetylglutamate kinase (Symbiobacterium thermophilum (strain DSM 24528 / JCM 14929 / IAM 14863 / T)).